The sequence spans 145 residues: Large ribosomal subunit protein uL11 (145 aa).

Belongs to the universal ribosomal protein uL11 family. Part of the ribosomal stalk of the 50S ribosomal subunit. Interacts with L10 and the large rRNA to form the base of the stalk. L10 forms an elongated spine to which L12 dimers bind in a sequential fashion forming a multimeric L10(L12)X complex. In terms of processing, one or more lysine residues are methylated.

Its function is as follows. Forms part of the ribosomal stalk which helps the ribosome interact with GTP-bound translation factors. The protein is Large ribosomal subunit protein uL11 of Rickettsia prowazekii (strain Madrid E).